The primary structure comprises 91 residues: MARSVWKGPFVDLHLLKKAETAQEGGSTAPIKTWSRRSTILPQFVGLTFNVYNGRKFVPVSVNEDMVGMKLGEFAPTRFFPGHAADKKGKR.

This sequence belongs to the universal ribosomal protein uS19 family.

Protein S19 forms a complex with S13 that binds strongly to the 16S ribosomal RNA. This is Small ribosomal subunit protein uS19 from Sphingopyxis alaskensis (strain DSM 13593 / LMG 18877 / RB2256) (Sphingomonas alaskensis).